The sequence spans 66 residues: Phylloseptin-S2 (66 aa).

A signal peptide spans 1-22 (MAFLKKSLFLVLFLGLVSLSIC). The propeptide occupies 23–46 (EEEKRETEEEEHDQEEDDKSEEKR). Residues 25–44 (EKRETEEEEHDQEEDDKSEE) form a disordered region. Positions 30 to 41 (EEEEHDQEEDDK) are enriched in acidic residues. Position 65 is a phenylalanine amide (phenylalanine 65).

As to expression, expressed by the skin glands.

The protein resides in the secreted. The protein localises to the target cell membrane. Its function is as follows. Antimicrobial peptide with high activity against Gram-positive bacteria, moderate activity against Gram-negative bacteria, and moderate activity against fungi. Acts by causing bacterial membrane disruption inducing leakage of the intracellular content followed by cell death. It adopts an alpha-helical amphipathic structure in membrane environments. Also shows highly potent antiparasitic activity against Leishmania species. Shows moderate hemolytic activity on human erythrocytes (LC(50)=25 uM). Is also active on human monocytes (IC(50)=22.5 uM). The chain is Phylloseptin-S2 from Phyllomedusa sauvagei (Sauvage's leaf frog).